A 127-amino-acid polypeptide reads, in one-letter code: Fluoride-specific ion channel FluC (127 aa).

Helical transmembrane passes span 28 to 48 (LALF…SLAM), 73 to 93 (TGVL…ALLI), and 98 to 118 (VGLA…GLFL). Na(+) contacts are provided by Gly-77 and Thr-80.

Belongs to the fluoride channel Fluc/FEX (TC 1.A.43) family.

The protein resides in the cell inner membrane. The enzyme catalyses fluoride(in) = fluoride(out). Na(+) is not transported, but it plays an essential structural role and its presence is essential for fluoride channel function. In terms of biological role, fluoride-specific ion channel. Important for reducing fluoride concentration in the cell, thus reducing its toxicity. This chain is Fluoride-specific ion channel FluC, found in Beijerinckia indica subsp. indica (strain ATCC 9039 / DSM 1715 / NCIMB 8712).